Here is a 212-residue protein sequence, read N- to C-terminus: Fibroblast growth factor 8b (212 aa).

Residues 1–27 (MRLKSSRLGYLFLQFMTLCFYTQMTMQ) form the signal peptide. N-linked (GlcNAc...) asparagine glycosylation is present at Asn-139.

The protein belongs to the heparin-binding growth factors family.

Its subcellular location is the secreted. Functionally, may act as signaling molecule during development of the midbrain-hindbrain boundary (MHB) organizer, and be involved in patterning of the nervous system. The protein is Fibroblast growth factor 8b (fgf8b) of Danio rerio (Zebrafish).